Here is a 421-residue protein sequence, read N- to C-terminus: tRNA (guanine-N(7)-)-methyltransferase non-catalytic subunit TRM82 (421 aa).

WD repeat units follow at residues 72–112 (AVYS…EDPE), 170–212 (GHVS…IVDK), and 216–258 (GHKE…SQYS).

The protein belongs to the WD repeat TRM82 family. Forms a heterodimer with the catalytic subunit TRM8.

It is found in the nucleus. It functions in the pathway tRNA modification; N(7)-methylguanine-tRNA biosynthesis. Functionally, required for the formation of N(7)-methylguanine at position 46 (m7G46) in tRNA. In the complex, it is required to stabilize and induce conformational changes of the catalytic subunit. The sequence is that of tRNA (guanine-N(7)-)-methyltransferase non-catalytic subunit TRM82 from Candida glabrata (strain ATCC 2001 / BCRC 20586 / JCM 3761 / NBRC 0622 / NRRL Y-65 / CBS 138) (Yeast).